The chain runs to 305 residues: UDP-3-O-acyl-N-acetylglucosamine deacetylase (305 aa).

Residues H79, H238, and D242 each contribute to the Zn(2+) site. Catalysis depends on H265, which acts as the Proton donor.

This sequence belongs to the LpxC family. Zn(2+) serves as cofactor.

The catalysed reaction is a UDP-3-O-[(3R)-3-hydroxyacyl]-N-acetyl-alpha-D-glucosamine + H2O = a UDP-3-O-[(3R)-3-hydroxyacyl]-alpha-D-glucosamine + acetate. It functions in the pathway glycolipid biosynthesis; lipid IV(A) biosynthesis; lipid IV(A) from (3R)-3-hydroxytetradecanoyl-[acyl-carrier-protein] and UDP-N-acetyl-alpha-D-glucosamine: step 2/6. Functionally, catalyzes the hydrolysis of UDP-3-O-myristoyl-N-acetylglucosamine to form UDP-3-O-myristoylglucosamine and acetate, the committed step in lipid A biosynthesis. This chain is UDP-3-O-acyl-N-acetylglucosamine deacetylase, found in Klebsiella pneumoniae (strain 342).